We begin with the raw amino-acid sequence, 423 residues long: CinA-like protein (423 aa).

The protein belongs to the CinA family.

This is CinA-like protein from Prochlorococcus marinus (strain SARG / CCMP1375 / SS120).